Here is a 708-residue protein sequence, read N- to C-terminus: Potassium-transporting ATPase ATP-binding subunit 2 (708 aa).

Residues 1-23 form a disordered region; sequence MRSPSRLPHETRDSRQRTPKTDM. The segment covering 7 to 23 has biased composition (basic and acidic residues); sequence LPHETRDSRQRTPKTDM. Helical transmembrane passes span 49–69, 84–104, 235–255, and 283–303; these read MFIV…PNLF, GLIT…EAVA, IALT…VATM, and SIAI…GGLL. The active-site 4-aspartylphosphate intermediate is aspartate 339. Residues aspartate 376, glutamate 380, 407–414, and lysine 426 each bind ATP; that span reads FSAKTRMS. 2 residues coordinate Mg(2+): aspartate 549 and aspartate 553. A run of 3 helical transmembrane segments spans residues 619–639, 645–665, and 683–703; these read FAIL…IMGL, AIIS…PLAL, and IFIY…LIDV.

This sequence belongs to the cation transport ATPase (P-type) (TC 3.A.3) family. Type IA subfamily. As to quaternary structure, the system is composed of three essential subunits: KdpA, KdpB and KdpC.

It is found in the cell inner membrane. The enzyme catalyses K(+)(out) + ATP + H2O = K(+)(in) + ADP + phosphate + H(+). In terms of biological role, part of the high-affinity ATP-driven potassium transport (or Kdp) system, which catalyzes the hydrolysis of ATP coupled with the electrogenic transport of potassium into the cytoplasm. This subunit is responsible for energy coupling to the transport system and for the release of the potassium ions to the cytoplasm. The chain is Potassium-transporting ATPase ATP-binding subunit 2 from Nostoc sp. (strain PCC 7120 / SAG 25.82 / UTEX 2576).